We begin with the raw amino-acid sequence, 281 residues long: Beta-etherase (281 aa).

The region spanning 11-87 is the GST N-terminal domain; the sequence is DLQLESGCTI…YLDEKYPDRP (77 aa). Residues 244–281 are disordered; the sequence is GDPEPFVRQTGPAGAGGQALNKGPQTTKMPPRVAEKAD.

It belongs to the GST superfamily.

It localises to the cell inner membrane. Its function is as follows. Able to degrade various dimeric lignin compounds. Catalyzes the unique and reductive cleavage of arylglycerol-beta-aryl ether. The protein is Beta-etherase (ligE) of Sphingobium sp. (strain NBRC 103272 / SYK-6).